Consider the following 434-residue polypeptide: D-amino acid dehydrogenase (434 aa).

An FAD-binding site is contributed by 3–17; that stretch reads VVILGSGVVGVASAW.

This sequence belongs to the DadA oxidoreductase family. FAD is required as a cofactor.

The catalysed reaction is a D-alpha-amino acid + A + H2O = a 2-oxocarboxylate + AH2 + NH4(+). The protein operates within amino-acid degradation; D-alanine degradation; NH(3) and pyruvate from D-alanine: step 1/1. Functionally, oxidative deamination of D-amino acids. The polypeptide is D-amino acid dehydrogenase (Serratia proteamaculans (strain 568)).